An 822-amino-acid chain; its full sequence is IQ and AAA domain-containing protein 1-like (822 aa).

In terms of domain architecture, IQ spans Gln206 to Glu235. The span at Arg338–Lys363 shows a compositional bias: basic and acidic residues. 2 disordered regions span residues Arg338 to Lys378 and Arg457 to Thr484. The span at Lys464–Lys479 shows a compositional bias: basic residues. Residue Gly569–Lys576 coordinates ATP.

Belongs to the AAA ATPase family.

This chain is IQ and AAA domain-containing protein 1-like (Iqca1l), found in Rattus norvegicus (Rat).